Reading from the N-terminus, the 141-residue chain is Cell division protein SepF (141 aa).

The protein belongs to the SepF family. In terms of assembly, homodimer. Interacts with FtsZ.

The protein resides in the cytoplasm. Its function is as follows. Cell division protein that is part of the divisome complex and is recruited early to the Z-ring. Probably stimulates Z-ring formation, perhaps through the cross-linking of FtsZ protofilaments. Its function overlaps with FtsA. In Anoxybacillus flavithermus (strain DSM 21510 / WK1), this protein is Cell division protein SepF.